Consider the following 405-residue polypeptide: Serine/threonine-protein kinase 2 (405 aa).

Residues N54 to N405 form the Protein kinase domain. ATP contacts are provided by residues I60–V68 and K84. The active-site Proton acceptor is the D274.

It belongs to the protein kinase superfamily. Ser/Thr protein kinase family. Poxviruses subfamily. In terms of processing, phosphorylated in vivo. Autophosphorylated in vitro.

The protein localises to the host endoplasmic reticulum. It localises to the host endoplasmic reticulum-Golgi intermediate compartment. It carries out the reaction L-seryl-[protein] + ATP = O-phospho-L-seryl-[protein] + ADP + H(+). The enzyme catalyses L-threonyl-[protein] + ATP = O-phospho-L-threonyl-[protein] + ADP + H(+). Essential serine-protein kinase involved in the early stage of virion morphogenesis. The protein is Serine/threonine-protein kinase 2 (OPG054) of Vaccinia virus (strain L-IVP) (VACV).